Consider the following 381-residue polypeptide: MSESTVGKPITCKAAVAWEAAKPLSIEDVTVAPPKRHEVRIKLYDTGVCHTDAYTLSGVDPEGAFPVILGHEGAGIVESIGEGVTNVKVGDHVIALYTPECGECKFCKSGKTNLCGKIRATQGKGVMPDGTSRFTCKGKEILHFMGCSTFSQYTVVADISVVAINPKAEFDKACLLGCGITTGYGAATITANVQKGDNVAVFGGGIVGLSVIQGCAERGAAQIILVDISDKKEEWGQKLGATAFVNPTKLPEGTTIVDKLIEMTDGGCDFTFDCTGNVGVMRNALEACHKGWGTSVIIGVAAAGKEISTRPFQLVTGRTWKGAAFGGVKGRSQLPGIVNNYLDGKLKVEEFITHREPLAAINKAFEEMHAGDCIRAVVDLS.

Cysteine 49 provides a ligand contact to Zn(2+). Histidine 50 contributes to the NAD(+) binding site. Residues histidine 71, glutamate 72, cysteine 101, cysteine 104, cysteine 107, cysteine 115, and cysteine 178 each contribute to the Zn(2+) site. Residues 203–208, aspartate 227, and 298–300 contribute to the NAD(+) site; these read GGGIVG and IGV.

This sequence belongs to the zinc-containing alcohol dehydrogenase family. Class-III subfamily. Zn(2+) serves as cofactor.

The enzyme catalyses a primary alcohol + NAD(+) = an aldehyde + NADH + H(+). The catalysed reaction is a secondary alcohol + NAD(+) = a ketone + NADH + H(+). It carries out the reaction S-(hydroxymethyl)glutathione + NADP(+) = S-formylglutathione + NADPH + H(+). It catalyses the reaction S-(hydroxymethyl)glutathione + NAD(+) = S-formylglutathione + NADH + H(+). The enzyme catalyses S-nitrosoglutathione + NADH + H(+) = S-(hydroxysulfenamide)glutathione + NAD(+). Its function is as follows. Oxidizes long-chain alcohols and, in the presence of glutathione, is able to oxidize formaldehyde. Also acts as a S-nitroso-glutathione reductase by catalyzing the NADH-dependent reduction of S-nitrosoglutathione, thereby regulating protein S-nitrosylation. In Candida maltosa (Yeast), this protein is S-(hydroxymethyl)glutathione dehydrogenase (FDH1).